A 272-amino-acid polypeptide reads, in one-letter code: tRNA pseudouridine synthase A (272 aa).

The active-site Nucleophile is Asp-62. Tyr-120 is a substrate binding site.

Belongs to the tRNA pseudouridine synthase TruA family. As to quaternary structure, homodimer.

It carries out the reaction uridine(38/39/40) in tRNA = pseudouridine(38/39/40) in tRNA. Its function is as follows. Formation of pseudouridine at positions 38, 39 and 40 in the anticodon stem and loop of transfer RNAs. This is tRNA pseudouridine synthase A from Nitrosomonas europaea (strain ATCC 19718 / CIP 103999 / KCTC 2705 / NBRC 14298).